Reading from the N-terminus, the 462-residue chain is A-type ATP synthase subunit B (462 aa).

It belongs to the ATPase alpha/beta chains family. Has multiple subunits with at least A(3), B(3), C, D, E, F, H, I and proteolipid K(x).

The protein localises to the cell membrane. In terms of biological role, component of the A-type ATP synthase that produces ATP from ADP in the presence of a proton gradient across the membrane. The B chain is a regulatory subunit. The polypeptide is A-type ATP synthase subunit B (Methanococcus maripaludis (strain DSM 14266 / JCM 13030 / NBRC 101832 / S2 / LL)).